A 160-amino-acid chain; its full sequence is ATP synthase subunit delta, mitochondrial (160 aa).

The N-terminal 22 residues, 1-22 (MFRQSLRSIARTRTGTIGVRTY), are a transit peptide targeting the mitochondrion.

F-type ATP synthases have 2 components, the catalytic core F(1) and the membrane-embedded component F(0), linked together by a central stalk and a peripheral stalk. The central stalk, also called rotor shaft, is often seen as part of F(1). The peripheral stalk is seen as part of F(0). F(0) contains the membrane channel next to the rotor. F-type ATP synthases form dimers but each monomer functions independently in ATP generation. The dimer consists of 18 different polypeptides: ATP1 (subunit alpha, part of F(1), 3 molecules per monomer), ATP2 (subunit beta, part of F(1), 3 molecules per monomer), ATP3 (subunit gamma, part of the central stalk), ATP4 (subunit b, part of the peripheral stalk), ATP5/OSCP (subunit 5/OSCP, part of the peripheral stalk), ATP6 (subunit a, part of the peripheral stalk), ATP7 (subunit d, part of the peripheral stalk), ATP8 (subunit 8, part of the peripheral stalk), OLI1 (subunit c, part of the rotor, 10 molecules per monomer), ATP14 (subunit h, part of the peripheral stalk), ATP15 (subunit epsilon, part of the central stalk), ATP16 (subunit delta, part of the central stalk), ATP17 (subunit f, part of the peripheral stalk), ATP18 (subunit i/j, part of the peripheral stalk). Dimer-specific subunits are ATP19 (subunit k, at interface between monomers), ATP20 (subunit g, at interface between monomers), TIM11 (subunit e, at interface between monomers). Also contains subunit L.

It localises to the mitochondrion inner membrane. In terms of biological role, mitochondrial membrane ATP synthase (F(1)F(0) ATP synthase or Complex V) produces ATP from ADP in the presence of a proton gradient across the membrane which is generated by electron transport complexes of the respiratory chain. F-type ATP synthases consist of two structural domains, F(1) - containing the extramembraneous catalytic core, and F(0) - containing the membrane proton channel, linked together by a central stalk and a peripheral stalk. During catalysis, ATP synthesis in the catalytic domain of F(1) is coupled via a rotary mechanism of the central stalk subunits to proton translocation. Part of the complex F(1) domain and the central stalk which is part of the complex rotary element. Rotation of the central stalk against the surrounding alpha/ATP1(3)beta/ATP2(3) subunits leads to hydrolysis of ATP in three separate catalytic sites on the beta/ATP2 subunits. The chain is ATP synthase subunit delta, mitochondrial from Pichia angusta (Yeast).